Here is a 218-residue protein sequence, read N- to C-terminus: Thiopurine S-methyltransferase (218 aa).

S-adenosyl-L-methionine contacts are provided by W10, L45, E66, and R123.

It belongs to the class I-like SAM-binding methyltransferase superfamily. TPMT family.

The protein resides in the cytoplasm. The catalysed reaction is S-adenosyl-L-methionine + a thiopurine = S-adenosyl-L-homocysteine + a thiopurine S-methylether.. The polypeptide is Thiopurine S-methyltransferase (Shewanella loihica (strain ATCC BAA-1088 / PV-4)).